We begin with the raw amino-acid sequence, 194 residues long: Protein GrpE 2 (194 aa).

A compositionally biased stretch (basic and acidic residues) spans 1–17 (MNDIDKHKKETQTESKN). The disordered stretch occupies residues 1–29 (MNDIDKHKKETQTESKNDLNNTTITQNNV). Residues 18–29 (DLNNTTITQNNV) are compositionally biased toward polar residues.

This sequence belongs to the GrpE family. As to quaternary structure, homodimer.

The protein resides in the cytoplasm. Participates actively in the response to hyperosmotic and heat shock by preventing the aggregation of stress-denatured proteins, in association with DnaK and GrpE. It is the nucleotide exchange factor for DnaK and may function as a thermosensor. Unfolded proteins bind initially to DnaJ; upon interaction with the DnaJ-bound protein, DnaK hydrolyzes its bound ATP, resulting in the formation of a stable complex. GrpE releases ADP from DnaK; ATP binding to DnaK triggers the release of the substrate protein, thus completing the reaction cycle. Several rounds of ATP-dependent interactions between DnaJ, DnaK and GrpE are required for fully efficient folding. In Buchnera aphidicola subsp. Baizongia pistaciae (strain Bp), this protein is Protein GrpE 2.